We begin with the raw amino-acid sequence, 63 residues long: Overexpressed in colon carcinoma 1 protein homolog (63 aa).

Positions 1 to 10 (MGCGNSTATS) are enriched in polar residues. Positions 1–37 (MGCGNSTATSAAAGRGKPGAVKDATEDSITEDDKRRN) are disordered.

This sequence belongs to the OCC1 family.

This chain is Overexpressed in colon carcinoma 1 protein homolog, found in Rattus norvegicus (Rat).